Consider the following 354-residue polypeptide: Ferrochelatase (354 aa).

Histidine 204 and glutamate 306 together coordinate Fe cation.

The protein belongs to the ferrochelatase family.

The protein localises to the cytoplasm. It carries out the reaction heme b + 2 H(+) = protoporphyrin IX + Fe(2+). Its pathway is porphyrin-containing compound metabolism; protoheme biosynthesis; protoheme from protoporphyrin-IX: step 1/1. In terms of biological role, catalyzes the ferrous insertion into protoporphyrin IX. This Coxiella burnetii (strain CbuK_Q154) (Coxiella burnetii (strain Q154)) protein is Ferrochelatase.